Consider the following 799-residue polypeptide: MDVADLPGVPEWLPDHLRDDGIEELYPPQAEAVEAGVTEGENLVASIPTASGKTLIAELAMLSSVARGGKALYIVPLRALASEKQADFEEFEQYGLDIGVSTGNYESEGGWLADKDIVVATSEKVDSLVRNDAPWIEDLTCVVTDEVHLVDDGERGPTLEVTLAKLRRLNPDLQTVALSATIGNAEALATWLDAGLVDSDWRPIDLQKGVHYGQALHLEDGSQQRLSVQNNEKQTAAIVRDTLEDDGSTLVFVNSRRNAEAAAGRLANTVRPHLSTEERDQLADIAEEIRDVSDTETSDDLADAVADGAAFHHAGLSRGHRELVEDAFRDRLVKVVCATPTLAAGVNTPSRRVVVRDWRRYDGSAGGMAPLSVLEVHQMMGRAGRPGLDPYGEAVLIASSHDEVDELFERYVWADPEPVRSKLAAEPALRTHILATVASGFARSRKGLLEFLEQTLYASQTDDSGQLERVVDDVLTYLQRNDFLEIEAGELDATSLGHTVSRLYLDPMSAAEIVDGLRDWERGASDSTSASGSPADAQAEPPANSGFTTASELAEDADESDADRDPDDISALGLYHLVSRTPDMYQLYLRSGDREEYEMELFEREEELLGPTPSEFEEGRFEDWLSALKTARLLEDWATEVDEATITDRYGVGPGDIRGKVETAQWLLGAAESLASEVDLDAARAISEARIRVEHGVREELVDLAGVRGVGRKRARRLFQAGITDRAQLRDADKAVVLAALRGRRKTAENVLENAGHRDPSMEGVEPAPDVSVDLNDGADGDASAESTANDDQASLGDF.

ATP is bound by residues glutamine 29 and 47–54; that span reads IPTASGKT. A Helicase ATP-binding domain is found at 34-200; sequence EAGVTEGENL…WLDAGLVDSD (167 aa). The short motif at 145-148 is the DEAH box element; the sequence is DEVH. Residues 234–435 enclose the Helicase C-terminal domain; that stretch reads QTAAIVRDTL…EPALRTHILA (202 aa). Disordered regions lie at residues 522-566 and 750-799; these read RGAS…DRDP and NVLE…LGDF. A compositionally biased stretch (acidic residues) spans 553–566; it reads LAEDADESDADRDP.

Belongs to the helicase family. Hel308 subfamily. As to quaternary structure, monomer.

The enzyme catalyses Couples ATP hydrolysis with the unwinding of duplex DNA by translocating in the 3'-5' direction.. The catalysed reaction is ATP + H2O = ADP + phosphate + H(+). In terms of biological role, DNA-dependent ATPase and 3'-5' DNA helicase that may be involved in repair of stalled replication forks. The polypeptide is ATP-dependent DNA helicase Hel308 (Haloarcula marismortui (strain ATCC 43049 / DSM 3752 / JCM 8966 / VKM B-1809) (Halobacterium marismortui)).